The primary structure comprises 446 residues: UPF0597 protein DvMF_1488 (446 aa).

Belongs to the UPF0597 family.

This Nitratidesulfovibrio vulgaris (strain DSM 19637 / Miyazaki F) (Desulfovibrio vulgaris) protein is UPF0597 protein DvMF_1488.